The chain runs to 492 residues: GDP-fucose protein O-fucosyltransferase 4 (492 aa).

At 1–7 the chain is on the cytoplasmic side; the sequence is MAAGPIR. Residues 8–24 form a helical; Signal-anchor for type II membrane protein membrane-spanning segment; that stretch reads VVLVLLGVLSVCAASGH. The Lumenal portion of the chain corresponds to 25-492; sequence GSVAEREAGG…HEIFMKRQHL (468 aa). Asn166 carries an N-linked (GlcNAc...) asparagine glycan. Residues Cys389 and Cys392 are joined by a disulfide bond. An N-linked (GlcNAc...) asparagine glycan is attached at Asn443.

Belongs to the glycosyltransferase 10 family.

It is found in the endoplasmic reticulum membrane. It carries out the reaction L-threonyl-[protein] + GDP-beta-L-fucose = 3-O-(alpha-L-fucosyl)-L-threonyl-[protein] + GDP + H(+). It catalyses the reaction L-seryl-[protein] + GDP-beta-L-fucose = 3-O-(alpha-L-fucosyl)-L-seryl-[protein] + GDP + H(+). The protein operates within protein modification; protein glycosylation. In terms of biological role, protein O-fucosyltransferase that specifically catalyzes O-fucosylation of serine or threonine residues in EMI domains of target proteins, such as MMRN1, MMRN2 and EMID1. Attaches fucose through an O-glycosidic linkage. O-fucosylation of EMI domain-containing proteins may be required for facilitating protein folding and secretion. Also shows minor alpha-(1,3)-fucosyltransferase activity toward activity toward biantennary N-glycan acceptors. However, this was tested with a library of synthetic substrates and this activity is unsure in vivo. The polypeptide is GDP-fucose protein O-fucosyltransferase 4 (Homo sapiens (Human)).